The sequence spans 547 residues: Glucose-6-phosphate isomerase 2 (547 aa).

Glu351 (proton donor) is an active-site residue. Active-site residues include His382 and Lys508.

It belongs to the GPI family.

Its subcellular location is the cytoplasm. It carries out the reaction alpha-D-glucose 6-phosphate = beta-D-fructose 6-phosphate. It participates in carbohydrate biosynthesis; gluconeogenesis. The protein operates within carbohydrate degradation; glycolysis; D-glyceraldehyde 3-phosphate and glycerone phosphate from D-glucose: step 2/4. In terms of biological role, catalyzes the reversible isomerization of glucose-6-phosphate to fructose-6-phosphate. In Neisseria meningitidis serogroup B (strain ATCC BAA-335 / MC58), this protein is Glucose-6-phosphate isomerase 2.